Here is a 521-residue protein sequence, read N- to C-terminus: UPF0053 protein BU323 (521 aa).

The next 7 helical transmembrane spans lie at 13–33 (LLTL…FVAI), 49–69 (IGLG…SWIV), 80–100 (FFSL…LLFK), 125–145 (FWAV…DAII), 150–170 (MVNQ…LMLL), 185–205 (VVVL…TEAL), and 207–227 (FCIP…IEIF). CBS domains are found at residues 311–370 (MTPR…KIDA) and 374–434 (SSKI…DADE).

It belongs to the UPF0053 family.

The protein resides in the cell membrane. This is UPF0053 protein BU323 from Buchnera aphidicola subsp. Acyrthosiphon pisum (strain APS) (Acyrthosiphon pisum symbiotic bacterium).